Consider the following 514-residue polypeptide: Myocyte-specific enhancer factor 2D (514 aa).

The MADS-box domain occupies 3–57 (RKKIQIQRITDERNRQVTFTKRKFGLMKKAYELSVLCDCEIALIIFNHSNKLFQY). A DNA-binding region (mef2-type) is located at residues 58 to 86 (ASTDMDKVLLKYTEYNEPHESRTNADIIE). A phosphoserine mark is found at Asp-97, Ser-98, and Ser-106. Leu-107 bears the Phosphothreonine mark. The residue at position 110 (Ser-110) is a Phosphoserine. Ser-121 is subject to Phosphoserine; by PKA. The tract at residues 174 to 207 (TDPRLLSPQQPALQRNSVSPGLPQRPASAGAMLG) is disordered. Residue Ser-180 is modified to Phosphoserine; by MAPK7. Residues 180–192 (SPQQPALQRNSVS) are compositionally biased toward polar residues. Phosphoserine; by PKA is present on Ser-190. The residue at position 231 (Ser-231) is a Phosphoserine. The disordered stretch occupies residues 244–269 (NKVIPAKSPPPPTHNTQLGAPSRKPD). Lys-245 carries the post-translational modification N6-acetyllysine. Ser-251 is subject to Phosphoserine. Residues 286-292 (TEDHLDL) form a beta domain region. 2 disordered regions span residues 364-399 (WQQP…QQPH) and 430-514 (SIKS…WTLK). Pro residues predominate over residues 367–396 (PQPPQQPQPPQPPQSQPQPPQPQPQQPPQQ). Position 432 is an N6-acetyllysine; alternate (Lys-432). Lys-432 is covalently cross-linked (Glycyl lysine isopeptide (Lys-Gly) (interchain with G-Cter in SUMO); alternate). Ser-437 bears the Phosphoserine mark.

It belongs to the MEF2 family. Forms a complex with class II HDACs in undifferentiating cells. On myogenic differentiation, HDACs are released into the cytoplasm allowing MEF2s to interact with other proteins for activation. Interacts with HDAC4 (in undifferentiating cells); the interaction translocates MEF2D to nuclear dots. Forms a heterodimer with MEF2A. Interacts with MAPK7; the interaction phosphorylates but does not activate MEF2D. Interacts with MYOG. Interacts with CCAR2 and HDAC3. Phosphorylated on Ser-437 is which is required for Lys-432 sumoylation and inhibits transcriptional activity. Phosphorylation on this residue by CDK5 is dependent on p35 and calpains. Phosphorylated by PKA at Ser-121 and Ser-190 represses transcriptional activity in embryonic and postnatal skeletal muscle, and stabilizes protein levels. No in vitro phosphorylation by PKA on Thr-20. Phosphorylated and activated by CaMK4. In terms of processing, acetylated on Lys-432 by CREBBP. Acetylated by EP300. Deacetylated by SIRT1 and HDAC3. Post-translationally, sumoylated on Lys-432 with SUMO2 but not SUMO1; which inhibits transcriptional activity and myogenic activity. Desumoylated by SENP3. Proteolytically cleaved in cerebellar granule neurons by caspase 7 following neurotoxicity. Preferentially cleaves the CDK5-mediated hyperphosphorylated form which leads to neuron apoptosis and transcriptional inactivation. As to expression, widely expressed though mainly restricted to skeletal and cardiac muscle, brain, neurons and lymphocytes. Differentially expressed depending on if isoforms contain the beta domain or not, with the total expression of the beta domain-lacking isoforms vastly exceeding that of the beta domain-containing isoforms. Isoforms containing the beta domain are expressed primarily in skeletal and cardiac muscle and in brain. Also present in lung and testis. Splicing to include the beta domain is induced in differentiating myocytes. Isoforms lacking the beta domain are expressed less abundantly in skeletal muscle, brain and lymphocytes, and are uniquely found in ovary, liver, spleen and kidney. In embryos, the beta domain-containing and beta domain-lacking isoforms are equally expressed. Also expressed cerebellar granule neurons and other regions of the CNS. Highest levels in the olfactory bulb, cortex, hippocampus, thalamus and cerebellum.

It is found in the nucleus. Its function is as follows. Transcriptional activator which binds specifically to the MEF2 element, 5'-YTA[AT](4)TAR-3', found in numerous muscle-specific, growth factor- and stress-induced genes. Mediates cellular functions not only in skeletal and cardiac muscle development, but also in neuronal differentiation and survival. Plays diverse roles in the control of cell growth, survival and apoptosis via p38 MAPK signaling in muscle-specific and/or growth factor-related transcription. Plays a critical role in the regulation of neuronal apoptosis. This Mus musculus (Mouse) protein is Myocyte-specific enhancer factor 2D (Mef2d).